Here is a 205-residue protein sequence, read N- to C-terminus: Heme-binding protein 2 (205 aa).

Positions 1–37 (MAEEPEPDLGVAEGSEDQALEMPSWKAPEDIDPQPGS) are disordered. Residue Ala-2 is modified to N-acetylalanine. Ser-181 carries the phosphoserine modification.

The protein belongs to the HEBP family. In terms of assembly, monomer. Interacts with LRPPRC. May interact with BCL2L1; an interaction with BCL2L1 was observed using a peptide, but not with the full-length protein. The full-length protein would have to undergo a major conformation change for the interaction to occur. Interacts with PDCD6.

Its subcellular location is the cytoplasm. It is found in the mitochondrion. In terms of biological role, can promote mitochondrial permeability transition and facilitate necrotic cell death under different types of stress conditions. May have low affinity for heme. The protein is Heme-binding protein 2 (Hebp2) of Mus musculus (Mouse).